The chain runs to 264 residues: Transmembrane protein 270 (264 aa).

A run of 3 helical transmembrane segments spans residues 31 to 51 (HLYR…LGLA), 74 to 94 (LSLA…LLLW), and 133 to 153 (LFLS…LLTW). Residues 227-236 (AQEVKSQETS) show a composition bias toward polar residues. A disordered region spans residues 227–264 (AQEVKSQETSGPPPQFLIPESSTTESGPLPPQPETPGE). Positions 254-264 (PLPPQPETPGE) are enriched in pro residues.

Testis.

The protein localises to the membrane. This is Transmembrane protein 270 from Mus musculus (Mouse).